A 512-amino-acid polypeptide reads, in one-letter code: MLFEGLELVSALATLAACLVSVTLLLAVSQQLWQLRWAATRDKSCKLPIPKGSMGFPLIGETGHWLLQGSGFQSSRREKYGNVFKTHLLGRPLIRVTGAENVRKILLGEHQLVSTEWPRSARVLLGPNTVANSIGDIHRNKRKVFSKIFSHEALESYLPKIQLVIQDTLRAWSSQPEAINVYQEAQRLTFRMAVRVLLGFSIPEEDLGHLFEVYQQFVENVFSLPVDLPFSGYRRGIQARQILQKGLEKAIREKLQCTQGKDYSDALDILIESSKEHGKEMTMQELKDGTLELIFAAYATTASASTSLIMQLLKHPAVLEKLREELRAQGLLHGGGCPCEGTLRLDTLSSLRYLDCVIKEVMRLFTPVSGGYRTVLQTFELDGFQIPKGWSVMYSIRDTHDTAPVFKDVNVFDPDRFSQARSEDKDGRFHYLPFGGGVRTCLGKHLAKLFLKVLAVELASTSRFELATRTFPRITLVPVLHPVDGLSVKFFGLDSNQNEILPETEAMLSATV.

Cysteine 441 contributes to the heme binding site.

This sequence belongs to the cytochrome P450 family. Requires heme as cofactor.

Its subcellular location is the endoplasmic reticulum membrane. It localises to the microsome membrane. It catalyses the reaction all-trans-retinoate + reduced [NADPH--hemoprotein reductase] + O2 = all-trans-4-hydroxyretinoate + oxidized [NADPH--hemoprotein reductase] + H2O + H(+). The enzyme catalyses all-trans-retinoate + reduced [NADPH--hemoprotein reductase] + O2 = all-trans-18-hydroxyretinoate + oxidized [NADPH--hemoprotein reductase] + H2O + H(+). Its function is as follows. A cytochrome P450 monooxygenase involved in the metabolism of retinoates (RAs), the active metabolites of vitamin A, and critical signaling molecules in animals. RAs exist as at least four different isomers: all-trans-RA (atRA), 9-cis-RA, 13-cis-RA, and 9,13-dicis-RA, where atRA is considered to be the biologically active isomer, although 9-cis-RA and 13-cis-RA also have activity. Catalyzes the hydroxylation of atRA primarily at C-4 and C-18, thereby contributing to the regulation of atRA homeostasis and signaling. Hydroxylation of atRA limits its biological activity and initiates a degradative process leading to its eventual elimination. Involved in the convertion of atRA to all-trans-4-oxo-RA. Can oxidize all-trans-13,14-dihydroretinoate (DRA) to metabolites which could include all-trans-4-oxo-DRA, all-trans-4-hydroxy-DRA, all-trans-5,8-epoxy-DRA, and all-trans-18-hydroxy-DRA. Shows preference for the following substrates: atRA &gt; 9-cis-RA &gt; 13-cis-RA. Plays a central role in germ cell development: acts by degrading RAs in the developing testis, preventing STRA8 expression, thereby leading to delay of meiosis. Required for the maintenance of the undifferentiated state of male germ cells during embryonic development in Sertoli cells, inducing arrest in G0 phase of the cell cycle and preventing meiotic entry. Plays a role in skeletal development, both at the level of patterning and in the ossification of bone and the establishment of some synovial joints. Essential for postnatal survival. In terms of biological role, also has a significant activity in oxidation of tazarotenic acid and may therefore metabolize that xenobiotic in vivo. The protein is Cytochrome P450 26B1 (Cyp26b1) of Mus musculus (Mouse).